A 139-amino-acid polypeptide reads, in one-letter code: MTVEKVDATVADFDAHFDKLFAAGDDAEGKVKLLLFLADRDASSNQTWCPDCNVAEPVIYDRVEAAAKGKEKDVVLLRAYVGDKPTWRDPAHPWRADPRFRLTGVPTLIRWENGAAAARLGDDEAHLADKVDAVVNAAN.

The Thioredoxin domain maps to 1 to 136 (MTVEKVDATV…LADKVDAVVN (136 aa)). Catalysis depends on nucleophile residues cysteine 49 and cysteine 52. The cysteines at positions 49 and 52 are disulfide-linked.

Belongs to the thioredoxin family.

Functionally, probable thiol-disulfide oxidoreductase that may participate in various redox reactions. In Oryza sativa subsp. japonica (Rice), this protein is Thioredoxin-like protein Clot.